The following is a 105-amino-acid chain: Met repressor (105 aa).

The protein belongs to the MetJ family. In terms of assembly, homodimer.

It localises to the cytoplasm. Its function is as follows. This regulatory protein, when combined with SAM (S-adenosylmethionine) represses the expression of the methionine regulon and of enzymes involved in SAM synthesis. This Yersinia pestis bv. Antiqua (strain Antiqua) protein is Met repressor.